The following is a 391-amino-acid chain: Succinate--CoA ligase [ADP-forming] subunit beta (391 aa).

The ATP-grasp domain maps to 9–248 (KDILRKFGVA…ITEEDPFEVE (240 aa)). Residues Lys50, 57–59 (GRG), Glu103, Met106, and Glu111 contribute to the ATP site. Residues Asn203 and Asp217 each contribute to the Mg(2+) site. Substrate-binding positions include Asn268 and 325–327 (GIV).

The protein belongs to the succinate/malate CoA ligase beta subunit family. In terms of assembly, heterotetramer of two alpha and two beta subunits. It depends on Mg(2+) as a cofactor.

It catalyses the reaction succinate + ATP + CoA = succinyl-CoA + ADP + phosphate. The enzyme catalyses GTP + succinate + CoA = succinyl-CoA + GDP + phosphate. The protein operates within carbohydrate metabolism; tricarboxylic acid cycle; succinate from succinyl-CoA (ligase route): step 1/1. In terms of biological role, succinyl-CoA synthetase functions in the citric acid cycle (TCA), coupling the hydrolysis of succinyl-CoA to the synthesis of either ATP or GTP and thus represents the only step of substrate-level phosphorylation in the TCA. The beta subunit provides nucleotide specificity of the enzyme and binds the substrate succinate, while the binding sites for coenzyme A and phosphate are found in the alpha subunit. This Chlorobium phaeovibrioides (strain DSM 265 / 1930) (Prosthecochloris vibrioformis (strain DSM 265)) protein is Succinate--CoA ligase [ADP-forming] subunit beta.